The following is a 166-amino-acid chain: Regulatory protein RecX (166 aa).

Belongs to the RecX family.

The protein localises to the cytoplasm. In terms of biological role, modulates RecA activity. This Salmonella newport (strain SL254) protein is Regulatory protein RecX.